The sequence spans 170 residues: Large ribosomal subunit protein uL5 (170 aa).

The protein belongs to the universal ribosomal protein uL5 family. As to quaternary structure, part of the 50S ribosomal subunit; contacts the 5S rRNA and probably tRNA. Forms a bridge to the 30S subunit in the 70S ribosome.

This is one of the proteins that bind and probably mediate the attachment of the 5S RNA into the large ribosomal subunit, where it forms part of the central protuberance. In the 70S ribosome it contacts protein S13 of the 30S subunit (bridge B1b), connecting the 2 subunits; this bridge is implicated in subunit movement. May contact the P site tRNA; the 5S rRNA and some of its associated proteins might help stabilize positioning of ribosome-bound tRNAs. This Thermoplasma acidophilum (strain ATCC 25905 / DSM 1728 / JCM 9062 / NBRC 15155 / AMRC-C165) protein is Large ribosomal subunit protein uL5.